The following is a 428-amino-acid chain: 3-phosphoshikimate 1-carboxyvinyltransferase (428 aa).

Residues Lys-23, Ser-24, and Arg-28 each contribute to the 3-phosphoshikimate site. Lys-23 provides a ligand contact to phosphoenolpyruvate. The phosphoenolpyruvate site is built by Gly-97 and Arg-125. Positions 170, 171, 172, 198, 314, 337, and 341 each coordinate 3-phosphoshikimate. Gln-172 serves as a coordination point for phosphoenolpyruvate. Asp-314 functions as the Proton acceptor in the catalytic mechanism. Phosphoenolpyruvate-binding residues include Arg-345, Arg-387, and Lys-412.

The protein belongs to the EPSP synthase family. As to quaternary structure, monomer.

The protein localises to the cytoplasm. The catalysed reaction is 3-phosphoshikimate + phosphoenolpyruvate = 5-O-(1-carboxyvinyl)-3-phosphoshikimate + phosphate. Its pathway is metabolic intermediate biosynthesis; chorismate biosynthesis; chorismate from D-erythrose 4-phosphate and phosphoenolpyruvate: step 6/7. In terms of biological role, catalyzes the transfer of the enolpyruvyl moiety of phosphoenolpyruvate (PEP) to the 5-hydroxyl of shikimate-3-phosphate (S3P) to produce enolpyruvyl shikimate-3-phosphate and inorganic phosphate. This Cronobacter sakazakii (strain ATCC BAA-894) (Enterobacter sakazakii) protein is 3-phosphoshikimate 1-carboxyvinyltransferase.